A 91-amino-acid chain; its full sequence is uncharacterized protein (91 aa).

It belongs to the FrmR/RcnR family.

It localises to the cytoplasm. This is an uncharacterized protein from Serratia marcescens.